Here is a 129-residue protein sequence, read N- to C-terminus: Small ribosomal subunit protein eS6 (129 aa).

Residues 53–88 (TGGSDTSGRPMRPDVRGVTTKEIMSDGGVGFEPTTD) form a disordered region.

This sequence belongs to the eukaryotic ribosomal protein eS6 family.

This Haloarcula marismortui (strain ATCC 43049 / DSM 3752 / JCM 8966 / VKM B-1809) (Halobacterium marismortui) protein is Small ribosomal subunit protein eS6 (rps6e).